Reading from the N-terminus, the 411-residue chain is O-glucosyltransferase rumi (411 aa).

The N-terminal stretch at 1-20 (MLINHLIVVLLISLVGTGGA) is a signal peptide. Intrachain disulfides connect Cys64–Cys75, Cys73–Cys378, Cys120–Cys126, and Cys282–Cys305. The active-site Proton donor/acceptor is Asp151. Residues 192-197 (ATKLHP) are interaction with the consensus sequence C-X-S-X-[PA]-C in peptide substrates. UDP-alpha-D-glucose contacts are provided by residues 229–233 (RGSRT), Arg237, 276–278 (VSF), and 294–298 (AASFR). Residues 408–411 (KDEL) carry the Prevents secretion from ER motif.

It belongs to the glycosyltransferase 90 family.

It is found in the endoplasmic reticulum lumen. Its pathway is protein modification; protein glycosylation. Protein O-glucosyltransferase. Catalyzes the reaction that attaches glucose through an O-glycosidic linkage to a conserved serine residue found in the consensus sequence C-X-S-X-[PA]-C in epidermal growth factor-like repeats. Regulates Notch signaling by glucosylating Notch in the ER, glucosylation is required for the correct folding and cleavage of Notch. The protein is O-glucosyltransferase rumi of Drosophila melanogaster (Fruit fly).